The primary structure comprises 600 residues: Isocitrate dehydrogenase kinase/phosphatase (600 aa).

Residues 335–341 (APGIRGM) and Lys-356 contribute to the ATP site. Asp-390 is an active-site residue.

Belongs to the AceK family.

It localises to the cytoplasm. It carries out the reaction L-seryl-[isocitrate dehydrogenase] + ATP = O-phospho-L-seryl-[isocitrate dehydrogenase] + ADP + H(+). In terms of biological role, bifunctional enzyme which can phosphorylate or dephosphorylate isocitrate dehydrogenase (IDH) on a specific serine residue. This is a regulatory mechanism which enables bacteria to bypass the Krebs cycle via the glyoxylate shunt in response to the source of carbon. When bacteria are grown on glucose, IDH is fully active and unphosphorylated, but when grown on acetate or ethanol, the activity of IDH declines drastically concomitant with its phosphorylation. The polypeptide is Isocitrate dehydrogenase kinase/phosphatase (Bordetella parapertussis (strain 12822 / ATCC BAA-587 / NCTC 13253)).